A 231-amino-acid polypeptide reads, in one-letter code: Large ribosomal subunit protein uL1 (231 aa).

It belongs to the universal ribosomal protein uL1 family. Part of the 50S ribosomal subunit.

In terms of biological role, binds directly to 23S rRNA. The L1 stalk is quite mobile in the ribosome, and is involved in E site tRNA release. Its function is as follows. Protein L1 is also a translational repressor protein, it controls the translation of the L11 operon by binding to its mRNA. The sequence is that of Large ribosomal subunit protein uL1 from Ectopseudomonas mendocina (strain ymp) (Pseudomonas mendocina).